Reading from the N-terminus, the 109-residue chain is MEVKAIHRGARISAQKTRLVADQIRGLPIERALNVLTFSPKKAAGIVKKVVESAIANAEHNEGADIDELKVKSIFVDKATSLKRFTARAKGRGNRIEKQTCHITVTLGN.

This sequence belongs to the universal ribosomal protein uL22 family. Part of the 50S ribosomal subunit.

In terms of biological role, this protein binds specifically to 23S rRNA; its binding is stimulated by other ribosomal proteins, e.g. L4, L17, and L20. It is important during the early stages of 50S assembly. It makes multiple contacts with different domains of the 23S rRNA in the assembled 50S subunit and ribosome. Functionally, the globular domain of the protein is located near the polypeptide exit tunnel on the outside of the subunit, while an extended beta-hairpin is found that lines the wall of the exit tunnel in the center of the 70S ribosome. This chain is Large ribosomal subunit protein uL22, found in Cupriavidus necator (strain ATCC 17699 / DSM 428 / KCTC 22496 / NCIMB 10442 / H16 / Stanier 337) (Ralstonia eutropha).